We begin with the raw amino-acid sequence, 473 residues long: Vasculin (473 aa).

Disordered stretches follow at residues 1-25 (MAQHDFAPAWLNFPTPPSSTKSSLN), 46-149 (RHNS…REPN), and 191-342 (VGNL…QERD). Ser-49 is subject to Phosphoserine. Residue Arg-87 is modified to Omega-N-methylarginine. The span at 119–133 (ETGRKEDKRERKQFE) shows a compositional bias: basic and acidic residues. Composition is skewed to polar residues over residues 194-204 (LPSQPVKNGTG) and 251-286 (AFKSTAKNFSPSTNSVKECNRSNSSSPVDKLNQQPR). A phosphoserine mark is found at Ser-274, Ser-276, Ser-322, and Ser-381. Over residues 293 to 329 (MRTDKKSEFLKALKRDRVEEEHEDESRAGSEKDDDSF) the composition is skewed to basic and acidic residues. A disordered region spans residues 444 to 473 (GPWKNSTFKPTTENDDTETSSSDTSDDDDV). The segment covering 456–473 (ENDDTETSSSDTSDDDDV) has biased composition (acidic residues).

This sequence belongs to the vasculin family. Interacts with GTF2B, GTF2F2, RNA polymerase II and TBP. In terms of tissue distribution, widely expressed. Some isoforms may be specifically expressed in veins and arteries (at protein level). Isoform 4 is widely expressed. Isoform 1, isoform 2 and isoform 3 may be specifically expressed in vascular smooth muscle cells.

Its subcellular location is the nucleus. The protein localises to the cytoplasm. Functionally, functions as a GC-rich promoter-specific transactivating transcription factor. The protein is Vasculin (GPBP1) of Homo sapiens (Human).